The sequence spans 492 residues: N-succinylglutamate 5-semialdehyde dehydrogenase (492 aa).

Residue 220–225 (GSASTG) coordinates NAD(+). Active-site residues include E243 and C277.

This sequence belongs to the aldehyde dehydrogenase family. AstD subfamily.

The catalysed reaction is N-succinyl-L-glutamate 5-semialdehyde + NAD(+) + H2O = N-succinyl-L-glutamate + NADH + 2 H(+). Its pathway is amino-acid degradation; L-arginine degradation via AST pathway; L-glutamate and succinate from L-arginine: step 4/5. Catalyzes the NAD-dependent reduction of succinylglutamate semialdehyde into succinylglutamate. The sequence is that of N-succinylglutamate 5-semialdehyde dehydrogenase from Salmonella paratyphi B (strain ATCC BAA-1250 / SPB7).